The following is a 284-amino-acid chain: MKRNPVVAGMFYPAEYHELLEMIEYCYLSPRGPKELPSKRGNYTKPLGIVSPHAGYIYSGPVAAHGYKKISENVSGEVTAIILGPNHTGLGSGISTMKGIWKTPFGDMEIDNEFADKLWKECDVLDIDENSHLREHSIEVQLPFLKHLEDLNIAKFKFVPISMMMQDYETSIDVGYFIAKVAKEMNRKIIIIASTDFSHYEPQESASKKDAIVIKDILELKDEEIFIDVVTHNISMCGYGPVIAMVKAMKDLGAKTANLLYYSTSGDVTKDYSEVVGYASILVK.

It belongs to the MEMO1 family.

This is MEMO1 family protein MmarC6_1286 from Methanococcus maripaludis (strain C6 / ATCC BAA-1332).